Here is a 517-residue protein sequence, read N- to C-terminus: Putative alpha-L-fucosidase 1 (517 aa).

The N-terminal stretch at 1–20 is a signal peptide; the sequence is MATILLLLLGLLVGLPLLRA. Residues N119, N249, N296, N321, N352, N496, and N511 are each glycosylated (N-linked (GlcNAc...) asparagine).

Belongs to the glycosyl hydrolase 29 family.

The protein resides in the secreted. Its subcellular location is the extracellular space. It localises to the apoplast. The enzyme catalyses an alpha-L-fucoside + H2O = L-fucose + an alcohol. Alpha-L-fucosidase is responsible for hydrolyzing the alpha-1,6-linked fucose joined to the reducing-end N-acetylglucosamine of the carbohydrate moieties of glycoproteins. Active only against 2'-fucosyl-lactitol when heterologously expressed. The protein is Putative alpha-L-fucosidase 1 of Oryza sativa subsp. japonica (Rice).